Here is a 64-residue protein sequence, read N- to C-terminus: Large ribosomal subunit protein bL35 (64 aa).

Belongs to the bacterial ribosomal protein bL35 family.

This Shewanella frigidimarina (strain NCIMB 400) protein is Large ribosomal subunit protein bL35.